Here is a 700-residue protein sequence, read N- to C-terminus: Elongation factor G (700 aa).

The tr-type G domain maps to 10–285 (DRTRNIGIMA…AVIDYLPSPL (276 aa)). Residues 19 to 26 (AHIDAGKT), 83 to 87 (DTPGH), and 137 to 140 (NKMD) each bind GTP.

Belongs to the TRAFAC class translation factor GTPase superfamily. Classic translation factor GTPase family. EF-G/EF-2 subfamily.

The protein localises to the cytoplasm. Functionally, catalyzes the GTP-dependent ribosomal translocation step during translation elongation. During this step, the ribosome changes from the pre-translocational (PRE) to the post-translocational (POST) state as the newly formed A-site-bound peptidyl-tRNA and P-site-bound deacylated tRNA move to the P and E sites, respectively. Catalyzes the coordinated movement of the two tRNA molecules, the mRNA and conformational changes in the ribosome. The protein is Elongation factor G of Lacticaseibacillus paracasei (strain ATCC 334 / BCRC 17002 / CCUG 31169 / CIP 107868 / KCTC 3260 / NRRL B-441) (Lactobacillus paracasei).